We begin with the raw amino-acid sequence, 241 residues long: DNA repair protein RecO (241 aa).

Belongs to the RecO family.

Its function is as follows. Involved in DNA repair and RecF pathway recombination. In Orientia tsutsugamushi (strain Ikeda) (Rickettsia tsutsugamushi), this protein is DNA repair protein RecO.